A 173-amino-acid polypeptide reads, in one-letter code: Calcineurin subunit B (173 aa).

4 EF-hand domains span residues 20 to 55 (DEID…AANP), 59 to 87 (RLMD…FSTK), 89 to 124 (NKKE…MVGN), and 130 to 165 (QLQQ…TNVY). The Ca(2+) site is built by Asp-33, Asp-35, Ser-37, Glu-44, Asp-65, Asn-67, Ser-69, Asp-71, Glu-76, Asp-102, Asp-104, Asp-106, Tyr-108, Glu-113, Asp-143, Asp-145, Asp-147, Lys-149, and Glu-154.

Belongs to the calcineurin regulatory subunit family. Composed of a catalytic subunit (A) and a regulatory subunit (B).

Its function is as follows. Regulatory subunit of calcineurin, a calcium-dependent, calmodulin stimulated protein phosphatase. Confers calcium sensitivity. The polypeptide is Calcineurin subunit B (CNB1) (Yarrowia lipolytica (strain CLIB 122 / E 150) (Yeast)).